We begin with the raw amino-acid sequence, 522 residues long: Vicilin-like seed storage protein At4g36700 (522 aa).

Residues 1–25 form the signal peptide; it reads MTRFAVLPLSVLLLVLLFLCTESLA. Residues Asn206, Asn303, Asn341, Asn374, and Asn414 are each glycosylated (N-linked (GlcNAc...) asparagine). In terms of domain architecture, Cupin type-1 spans 265–421; the sequence is FNVFESEPDF…SLNVSSVTID (157 aa). Positions 457–522 are disordered; the sequence is DERKRRHDER…EWEMEGEEES (66 aa). 2 stretches are compositionally biased toward basic and acidic residues: residues 466 to 491 and 501 to 515; these read RKKEEEEAKREEEERRKREEEEEKKR and EELRERQLPMEKEWE.

The protein belongs to the 7S seed storage protein family.

Functionally, seed storage protein. The polypeptide is Vicilin-like seed storage protein At4g36700 (Arabidopsis thaliana (Mouse-ear cress)).